Here is a 1483-residue protein sequence, read N- to C-terminus: Neuropathy target esterase sws (1483 aa).

Topologically, residues methionine 1 to threonine 34 are lumenal. Residues methionine 35–phenylalanine 55 traverse the membrane as a helical segment. Topologically, residues lysine 56 to asparagine 1483 are cytoplasmic. A nucleoside 3',5'-cyclic phosphate is bound at residue isoleucine 174–arginine 301. Disordered regions lie at residues alanine 348–asparagine 380 and serine 404–isoleucine 440. A compositionally biased stretch (polar residues) spans glycine 413 to isoleucine 440. Phosphoserine occurs at positions 418 and 424. A nucleoside 3',5'-cyclic phosphate is bound by residues glutamate 456–arginine 585 and isoleucine 574–arginine 701. Residues leucine 927–arginine 1093 form the PNPLA domain. The GXGXXG signature appears at glycine 931–glycine 936. The short motif at glycine 958–glycine 962 is the GXSXG element. The active-site Nucleophile is the serine 960. Aspartate 1080 (proton acceptor) is an active-site residue. A DGA/G motif is present at residues aspartate 1080–glycine 1082. Serine 1174 carries the post-translational modification Phosphoserine. Residues aspartate 1349–asparagine 1483 are disordered. Over residues alanine 1351–asparagine 1373 the composition is skewed to polar residues. Basic and acidic residues predominate over residues lysine 1382–glutamate 1396. The segment covering glutamate 1410–serine 1419 has biased composition (low complexity). The span at leucine 1445–proline 1458 shows a compositional bias: basic and acidic residues. Low complexity predominate over residues glutamine 1465–glutamate 1474.

This sequence belongs to the NTE family. As to quaternary structure, interacts with Pka-C3; interaction inhibits the catalytic function of Pka-C3 and the esterase activity of sws.

It is found in the endoplasmic reticulum membrane. The catalysed reaction is a 1-acyl-sn-glycero-3-phosphocholine + H2O = sn-glycerol 3-phosphocholine + a fatty acid + H(+). Phospholipase B that deacylates intracellular phosphatidylcholine (PtdCho), generating glycerophosphocholine (GroPtdCho). This deacylation occurs at both sn-2 and sn-1 positions of PtdCho. Its specific chemical modification by certain organophosphorus (OP) compounds leads to distal axonopathy. Plays a role in the signaling mechanism between neurons and glia that regulates glia wrapping during development of the adult brain. Essential for membrane lipid homeostasis and cell survival in both neurons and glia of the adult brain. This is Neuropathy target esterase sws from Drosophila virilis (Fruit fly).